Here is a 397-residue protein sequence, read N- to C-terminus: Acetate kinase (397 aa).

Mg(2+) is bound at residue asparagine 7. Position 14 (lysine 14) interacts with ATP. Arginine 91 contributes to the substrate binding site. The Proton donor/acceptor role is filled by aspartate 147. ATP contacts are provided by residues 207–211, 282–284, and 330–334; these read HLGNG, DFR, and GLGEN. Position 383 (glutamate 383) interacts with Mg(2+).

Belongs to the acetokinase family. In terms of assembly, homodimer. Mg(2+) serves as cofactor. It depends on Mn(2+) as a cofactor.

The protein resides in the cytoplasm. The enzyme catalyses acetate + ATP = acetyl phosphate + ADP. It functions in the pathway metabolic intermediate biosynthesis; acetyl-CoA biosynthesis; acetyl-CoA from acetate: step 1/2. Functionally, catalyzes the formation of acetyl phosphate from acetate and ATP. Can also catalyze the reverse reaction. The protein is Acetate kinase of Moorella thermoacetica (strain ATCC 39073 / JCM 9320).